A 590-amino-acid polypeptide reads, in one-letter code: FAD-linked oxidoreductase malF (590 aa).

The N-terminal stretch at 1-18 (MKYTATFALLILAIGIQT) is a signal peptide. Residues N44, N80, N103, N178, and N396 are each glycosylated (N-linked (GlcNAc...) asparagine). The FAD-binding PCMH-type domain maps to 117–303 (AQGRIPLYSA…TSVTLRAFAD (187 aa)).

The protein belongs to the oxygen-dependent FAD-linked oxidoreductase family. The cofactor is FAD.

Its function is as follows. FAD-linked oxidoreductase; part of the gene cluster that mediates the biosynthesis of malbrancheamide, a dichlorinated fungal indole alkaloid that belongs to a family of natural products containing a characteristic bicyclo[2.2.2]diazaoctane core. The first step of malbrancheamide biosynthesis involves coupling of L-proline and L-tryptophan by malG, a bimodular NRPS, to produce L-Pro-L-Trp aldehyde through reductive offloading. This compound undergoes spontaneous cyclization and dehydration to give a dienamine which is reverse prenylated at C-2 by malE. The other prenyltransferase present in the cluster, malB, displays modest activity, suggesting that may be a redundant gene in the pathway. Subsequently, a [4+2] Diels-Alder cyclo-addition catalyzed by the bifunctional enzyme malC forms the characteristic bicyclo[2.2.2]diazaoctane ring of premalbrancheamid. Finally, the flavin-dependent halogenase malA catalyzes the iterative dichlorination of the indole ring of premalbrancheamide to yield C-9 monochlorinated malbrancheamide B, C-8 monochlorinated isomalbrancheamide B, and dichlorinated malbrancheamide. MalA is also able to brominate premalbrancheamide at C-9 to yield malbrancheamide C, and, to a lesser extend, at C-8 to yield isomalbrancheamide C. Finally, malA can brominate C-9 monochlorinated malbrancheamide B at C-8 to yield malbrancheamide D, or C-8 monochlorinated isomalbrancheamide B at C-9 to produce isomalbrancheamide D. This is FAD-linked oxidoreductase malF from Malbranchea aurantiaca.